A 320-amino-acid chain; its full sequence is Eukaryotic translation initiation factor 3 subunit G (320 aa).

Residues 1–60 form a disordered region; sequence MPTGDFDSKPSWADQVEEEGEDDKCVTSELLKGIPLPTGDTSPEPELLPGDPLPPPKEVI. Phosphoserine occurs at positions 8 and 11. 2 positions are modified to phosphothreonine: threonine 38 and threonine 41. Phosphoserine occurs at positions 42, 189, 223, and 264. The tract at residues 204–233 is disordered; it reads QAAQSKTGKYVPPSLRDGASRRGESMQPNR. The segment covering 221–233 has biased composition (basic and acidic residues); it reads GASRRGESMQPNR. The RRM domain occupies 239-317; it reads ATIRVTNLSE…LILNVEWAKP (79 aa).

Belongs to the eIF-3 subunit G family. Component of the eukaryotic translation initiation factor 3 (eIF-3) complex, which is composed of 13 subunits: EIF3A, EIF3B, EIF3C, EIF3D, EIF3E, EIF3F, EIF3G, EIF3H, EIF3I, EIF3J, EIF3K, EIF3L and EIF3M. The eIF-3 complex appears to include 3 stable modules: module A is composed of EIF3A, EIF3B, EIF3G and EIF3I; module B is composed of EIF3F, EIF3H, and EIF3M; and module C is composed of EIF3C, EIF3D, EIF3E, EIF3K and EIF3L. EIF3C of module C binds EIF3B of module A and EIF3H of module B, thereby linking the three modules. EIF3J is a labile subunit that binds to the eIF-3 complex via EIF3B. The eIF-3 complex may interact with RPS6KB1 under conditions of nutrient depletion. Mitogenic stimulation may lead to binding and activation of a complex composed of MTOR and RPTOR, leading to phosphorylation and release of RPS6KB1 and binding of EIF4B to eIF-3. Interacts (via C-terminus) with AIFM1 (via N-terminus). Interacts with DHX33; the interaction is independent of RNA. Post-translationally, phosphorylated. Phosphorylation is enhanced upon serum stimulation.

It is found in the cytoplasm. It localises to the nucleus. The protein localises to the perinuclear region. Its function is as follows. RNA-binding component of the eukaryotic translation initiation factor 3 (eIF-3) complex, which is required for several steps in the initiation of protein synthesis. The eIF-3 complex associates with the 40S ribosome and facilitates the recruitment of eIF-1, eIF-1A, eIF-2:GTP:methionyl-tRNAi and eIF-5 to form the 43S pre-initiation complex (43S PIC). The eIF-3 complex stimulates mRNA recruitment to the 43S PIC and scanning of the mRNA for AUG recognition. The eIF-3 complex is also required for disassembly and recycling of post-termination ribosomal complexes and subsequently prevents premature joining of the 40S and 60S ribosomal subunits prior to initiation. The eIF-3 complex specifically targets and initiates translation of a subset of mRNAs involved in cell proliferation, including cell cycling, differentiation and apoptosis, and uses different modes of RNA stem-loop binding to exert either translational activation or repression. This subunit can bind 18S rRNA. The chain is Eukaryotic translation initiation factor 3 subunit G (Eif3g) from Mus musculus (Mouse).